A 960-amino-acid chain; its full sequence is Isoleucine--tRNA ligase (960 aa).

The 'HIGH' region motif lies at 60 to 70; sequence PYANGSLHIGH. Glu573 is an L-isoleucyl-5'-AMP binding site. Positions 614-618 match the 'KMSKS' region motif; that stretch reads KMSKS. Residue Lys617 coordinates ATP. Zn(2+) contacts are provided by Cys929, Cys932, Cys949, and Cys952.

This sequence belongs to the class-I aminoacyl-tRNA synthetase family. IleS type 1 subfamily. As to quaternary structure, monomer. The cofactor is Zn(2+).

The protein localises to the cytoplasm. It catalyses the reaction tRNA(Ile) + L-isoleucine + ATP = L-isoleucyl-tRNA(Ile) + AMP + diphosphate. Its function is as follows. Catalyzes the attachment of isoleucine to tRNA(Ile). As IleRS can inadvertently accommodate and process structurally similar amino acids such as valine, to avoid such errors it has two additional distinct tRNA(Ile)-dependent editing activities. One activity is designated as 'pretransfer' editing and involves the hydrolysis of activated Val-AMP. The other activity is designated 'posttransfer' editing and involves deacylation of mischarged Val-tRNA(Ile). This chain is Isoleucine--tRNA ligase, found in Nostoc sp. (strain PCC 7120 / SAG 25.82 / UTEX 2576).